A 153-amino-acid chain; its full sequence is Proline-rich membrane anchor 1 (153 aa).

Positions M1 to G35 are cleaved as a signal peptide. Over E36–G92 the chain is Extracellular. The 15-residue stretch at P56 to P70 folds into the PRAD domain. Positions P59–R71 are enriched in pro residues. The disordered stretch occupies residues P59 to N79. The N-linked (GlcNAc...) asparagine glycan is linked to N79. The chain crosses the membrane as a helical span at residues L93 to I113. The Cytoplasmic segment spans residues C114 to V153.

Interacts with ACHE, probably through disulfide bonds.

It is found in the cell membrane. It localises to the cell junction. The protein localises to the synapse. Required to anchor acetylcholinesterase (ACHE) to the basal lamina of the neuromuscular junction and to the membrane of neuronal synapses in brain. Also able to organize ACHE into tetramers. The protein is Proline-rich membrane anchor 1 (PRIMA1) of Homo sapiens (Human).